Reading from the N-terminus, the 438-residue chain is Serine/threonine exchanger SteT (438 aa).

Over 1 to 11 (MHTEDNGLKKE) the chain is Cytoplasmic. Residues 12 to 32 (IGLLFALTLVIGTIIGSGVFM) form a helical membrane-spanning segment. The Extracellular segment spans residues 33 to 45 (KPGAVLAYSGDSK). The helical transmembrane segment at 46–66 (MALFAWLLGGILTLAGGLTIA) threads the bilayer. Residues 67-98 (EIGTQIPKTGGLYTYLEEVYGEFWGFLCGWVQ) are Cytoplasmic-facing. The helical transmembrane segment at 99 to 119 (IIIYGPAIIGALGLYFGSLMA) threads the bilayer. At 120-126 (NLFGWGS) the chain is on the extracellular side. The chain crosses the membrane as a helical span at residues 127–147 (GLSKVIGIIAVLFLCVINIIG). Over 148-151 (TKYG) the chain is Cytoplasmic. Residues 152–172 (GFVQTLTTIGKLIPIACIIVF) form a helical membrane-spanning segment. Residues 173 to 193 (GLWKGDQHIFTAVNESISDMN) are Extracellular-facing. A helical membrane pass occupies residues 194 to 214 (FGAAILATLFAYDGWILLAAL). Residues 215 to 230 (GGEMKNPEKLLPRAMT) lie on the Cytoplasmic side of the membrane. A helical transmembrane segment spans residues 231–251 (GGLLIVTAIYIFINFALLHIL). Over 252–269 (SANEIVTLGENATSTAAT) the chain is Extracellular. The chain crosses the membrane as a helical span at residues 270 to 290 (MLFGSIGGKLISVGIIVSIFG). Over 291 to 327 (CLNGKVLSFPRVSFAMAERKQLPFAEKLSHVHPSFRT) the chain is Cytoplasmic. Residues 328 to 348 (PWIAISFQIALALIMMLISNP) traverse the membrane as a helical segment. Residues 349 to 352 (DKLS) are Extracellular-facing. Residues 353–373 (EISIFMIYIFYVMAFFAVFIL) traverse the membrane as a helical segment. At 374 to 388 (RKRAKGEKRAYSVPL) the chain is on the cytoplasmic side. Residues 389 to 409 (YPFMPILAIAGSFFVLGSTLI) form a helical membrane-spanning segment. Residues 410-411 (TD) are Extracellular-facing. A helical membrane pass occupies residues 412-432 (TMSCGLSILIGLAGLPVYYGM). The Cytoplasmic portion of the chain corresponds to 433-438 (KKRKAS).

It belongs to the amino acid-polyamine-organocation (APC) superfamily. L-type amino acid transporter (LAT) (TC 2.A.3.8) family. Monomer.

The protein localises to the cell membrane. Functionally, exhibits an obligate exchange activity for serine, threonine and aromatic amino acids. This is Serine/threonine exchanger SteT (steT) from Bacillus subtilis (strain 168).